We begin with the raw amino-acid sequence, 347 residues long: S-adenosylmethionine:tRNA ribosyltransferase-isomerase (347 aa).

This sequence belongs to the QueA family. As to quaternary structure, monomer.

It localises to the cytoplasm. The enzyme catalyses 7-aminomethyl-7-carbaguanosine(34) in tRNA + S-adenosyl-L-methionine = epoxyqueuosine(34) in tRNA + adenine + L-methionine + 2 H(+). Its pathway is tRNA modification; tRNA-queuosine biosynthesis. Its function is as follows. Transfers and isomerizes the ribose moiety from AdoMet to the 7-aminomethyl group of 7-deazaguanine (preQ1-tRNA) to give epoxyqueuosine (oQ-tRNA). This is S-adenosylmethionine:tRNA ribosyltransferase-isomerase from Halalkalibacterium halodurans (strain ATCC BAA-125 / DSM 18197 / FERM 7344 / JCM 9153 / C-125) (Bacillus halodurans).